Reading from the N-terminus, the 332-residue chain is Glycerol-3-phosphate dehydrogenase [NAD(P)+] (332 aa).

W13, K34, and K108 together coordinate NADPH. 3 residues coordinate sn-glycerol 3-phosphate: K108, G136, and S138. A140 lines the NADPH pocket. K191, D244, S254, R255, and N256 together coordinate sn-glycerol 3-phosphate. The active-site Proton acceptor is K191. R255 is an NADPH binding site. Residues V279 and E281 each coordinate NADPH.

It belongs to the NAD-dependent glycerol-3-phosphate dehydrogenase family.

It localises to the cytoplasm. It carries out the reaction sn-glycerol 3-phosphate + NAD(+) = dihydroxyacetone phosphate + NADH + H(+). The enzyme catalyses sn-glycerol 3-phosphate + NADP(+) = dihydroxyacetone phosphate + NADPH + H(+). It functions in the pathway membrane lipid metabolism; glycerophospholipid metabolism. In terms of biological role, catalyzes the reduction of the glycolytic intermediate dihydroxyacetone phosphate (DHAP) to sn-glycerol 3-phosphate (G3P), the key precursor for phospholipid synthesis. This Francisella tularensis subsp. mediasiatica (strain FSC147) protein is Glycerol-3-phosphate dehydrogenase [NAD(P)+].